Consider the following 183-residue polypeptide: Ribosome maturation factor RimP (183 aa).

The protein belongs to the RimP family.

Its subcellular location is the cytoplasm. Functionally, required for maturation of 30S ribosomal subunits. This is Ribosome maturation factor RimP from Leptothrix cholodnii (strain ATCC 51168 / LMG 8142 / SP-6) (Leptothrix discophora (strain SP-6)).